Here is a 107-residue protein sequence, read N- to C-terminus: Protein Asterix (107 aa).

A compositionally biased stretch (polar residues) spans 1 to 15 (MSHSHGNASSVNDPR). A disordered region spans residues 1 to 25 (MSHSHGNASSVNDPRQPSAAKPYIP). The helical transmembrane segment at 82–98 (ISMAMMFAIMGLVTNYL) threads the bilayer.

The protein belongs to the Asterix family.

It is found in the membrane. This chain is Protein Asterix, found in Arabidopsis thaliana (Mouse-ear cress).